The chain runs to 329 residues: uncharacterized protein (329 aa).

In terms of domain architecture, SIS spans 38-184; that stretch reads IVKLILKSQE…MACLMRAKNF (147 aa). Residue 56–61 participates in ATP binding; it reads GVGKSA. CBS domains follow at residues 211 to 267 and 270 to 329; these read QTTN…GVSL and EVRH…GLKA.

The protein belongs to the SIS family. GutQ/KpsF subfamily.

This is an uncharacterized protein from Helicobacter pylori (strain ATCC 700392 / 26695) (Campylobacter pylori).